The primary structure comprises 796 residues: MKHSLNTATSSSSVLKRTILYLVLISLAALVYCDDDYYDLLGVSKAATNREIRQAFKKLALKLHPDKNKDPDAHNKFLKINRAYEVLKDEDLRKKYDKYGEKGLDEQNQGGGYQSWSYYRYDFGIYDDDLEIITLDRGEFDGAVNSGELWFINFYSPGCSHCHDLAPTWRQFAKEMDGLLRIGAVNCGDNRMLCRSQGINSYPNLYIFKSGMNPVKYYGERSKERLVNFAMPYISSTVTELWAGNFRSSIEDAFSSGVGWLITFCSDTGDCLNSQTRSKLAGLLEGLVKVGWMDCATQGDLCDNLEITSSATVYFPPGSTLTDKENGDVLFLNSLDAREIYKEVLNHLPDLETISPESLQGKLSHHRWLLFFTFGTDEQSSLPEFKKLTVHLRSEHVQVGKFDCYSSPSICSELYIHKPCVAAFKGKGISAYEIHHGKVQLYDLVSFAKESVNSHVITLGPTNFPGKDRDTWLVDFFAPWCPPCRALLPELRIASKRLFGQIKFGTLDCTIHEGLCNMHNIRAYPTTVVFNHSNIHEYAGHNNAEEILEFIEDLRNPSVVTLTPETFQSLVRNRRGDEMWMVDFYAPWCGPCQALMPEWKRMARHINGLISVGSIDCQKYSLFCTQERVNGYPEIRLYPANINPQHTYYRYTGWHRDSQSLRNWALMYLPKASFDLTPESFHEHVINGKDNWVLDFYAPWCGPCQNFNPEFEILARAVKGKIKAGKVNCQAYEHLCNSASIRSYPTVRLYPYNGSKKKDYFGEQIDSRDAKEIAQIITKRIEAIKRVKEAYNKDEL.

Positions 1–33 are cleaved as a signal peptide; the sequence is MKHSLNTATSSSSVLKRTILYLVLISLAALVYC. The 65-residue stretch at 36-100 folds into the J domain; it reads DYYDLLGVSK…DLRKKYDKYG (65 aa). Residues 131–233 form the Thioredoxin 1 domain; sequence EIITLDRGEF…ERLVNFAMPY (103 aa). A disulfide bond links Cys159 and Cys162. Trxb stretches follow at residues 236 to 351 and 349 to 464; these read STVT…LPDL and PDLE…PTNF. Thioredoxin domains follow at residues 455 to 554, 558 to 668, and 672 to 780; these read HVIT…IEDL, SVVT…ALMY, and ASFD…ITKR. A disulfide bridge connects residues Cys481 and Cys484. Asn531 is a glycosylation site (N-linked (GlcNAc...) asparagine). 2 disulfides stabilise this stretch: Cys589–Cys592 and Cys701–Cys704. N-linked (GlcNAc...) asparagine glycosylation is present at Asn753. A Prevents secretion from ER motif is present at residues 793–796; that stretch reads KDEL.

It localises to the endoplasmic reticulum lumen. Its function is as follows. Endoplasmic reticulum disulfide reductase involved both in the correct folding of proteins and degradation of misfolded proteins. Required for efficient folding of proteins in the endoplasmic reticulum by catalyzing the removal of non-native disulfide bonds formed during the folding of proteins. Also involved in endoplasmic reticulum-associated degradation (ERAD) by reducing incorrect disulfide bonds in misfolded glycoproteins. The sequence is that of DnaJ homolog subfamily C member 10 (dnajc10) from Xenopus laevis (African clawed frog).